The sequence spans 198 residues: Recombination protein RecR (198 aa).

A C4-type zinc finger spans residues 57-72; sequence CSVCGHITDQDPCYIC. Residues 80-175 form the Toprim domain; sequence SVICVVQDPK…KLSRIAHGLP (96 aa).

It belongs to the RecR family.

Its function is as follows. May play a role in DNA repair. It seems to be involved in an RecBC-independent recombinational process of DNA repair. It may act with RecF and RecO. The sequence is that of Recombination protein RecR from Bacillus pumilus (strain SAFR-032).